The sequence spans 255 residues: Small ribosomal subunit protein uS2 (255 aa).

Belongs to the universal ribosomal protein uS2 family.

The polypeptide is Small ribosomal subunit protein uS2 (Streptococcus thermophilus (strain CNRZ 1066)).